Consider the following 171-residue polypeptide: Co-chaperone protein HscB (171 aa).

One can recognise a J domain in the interval 2–74 (DYFTLFGLPA…LTRAEYLLSL (73 aa)).

It belongs to the HscB family. Interacts with HscA and stimulates its ATPase activity. Interacts with IscU.

In terms of biological role, co-chaperone involved in the maturation of iron-sulfur cluster-containing proteins. Seems to help targeting proteins to be folded toward HscA. The chain is Co-chaperone protein HscB from Klebsiella pneumoniae subsp. pneumoniae (strain ATCC 700721 / MGH 78578).